The primary structure comprises 495 residues: Flagellin (495 aa).

The protein belongs to the bacterial flagellin family.

Its subcellular location is the secreted. It is found in the bacterial flagellum. In terms of biological role, flagellin is the subunit protein which polymerizes to form the filaments of bacterial flagella. The chain is Flagellin (fliC) from Salmonella typhimurium (strain LT2 / SGSC1412 / ATCC 700720).